Here is a 367-residue protein sequence, read N- to C-terminus: MHFVSYSLCYDVRSNIMEQPIYFYEPDENHGFLANFYPCSITVSGTCWPSSEHYYQAQKFDDVRLQEKVLRAEDAAQAFRLSREYQQWQRHDWYDIRVEVMRFIVREKFLQNTPLAHQLLATGDTELKEHSHKDAFWGDGGDGHGRNELGRILMMVREELQEHAPYNLVQFIDSAKLPTQWGTFQMYGFIEKATGKEHLALVYGDIEQQAAPLIRLHSECLTGDALFSARCDCGFQLAKALQNIVAEGAGVLLYLRQEGRGIGLINKIRAYHLQDDGADTVEANEQLGFGADMRDYAFCRGILSFLGIERVRLMTNNPRKVKALQLANIEVTERVPLQEGNNPHNHQYLRTKADKLGHMFDRNFVKP.

215 to 219 contacts GTP; that stretch reads RLHSE. Zn(2+) is bound by residues C220, C231, and C233. Residues Q236, 258–260, and T280 contribute to the GTP site; that span reads EGR. D292 serves as the catalytic Proton acceptor. The active-site Nucleophile is R294. Positions 315 and 320 each coordinate GTP.

It in the N-terminal section; belongs to the YbiA family. In the C-terminal section; belongs to the GTP cyclohydrolase II family. Requires Zn(2+) as cofactor.

The enzyme catalyses 2,5-diamino-6-hydroxy-4-(5-phosphoribosylamino)-pyrimidine + H2O = 2,5,6-triamino-4-hydroxypyrimidine + D-ribose 5-phosphate. It catalyses the reaction 5-amino-6-(5-phospho-D-ribosylamino)uracil + H2O = 5,6-diaminouracil + D-ribose 5-phosphate. The catalysed reaction is GTP + 4 H2O = 2,5-diamino-6-hydroxy-4-(5-phosphoribosylamino)-pyrimidine + formate + 2 phosphate + 3 H(+). It participates in cofactor biosynthesis; riboflavin biosynthesis; 5-amino-6-(D-ribitylamino)uracil from GTP: step 1/4. Functionally, catalyzes the hydrolysis of the N-glycosidic bond in the first two intermediates of riboflavin biosynthesis, which are highly reactive metabolites, yielding relatively innocuous products. Thus, can divert a surplus of harmful intermediates into relatively harmless products and pre-empt the damage these intermediates would otherwise do. Has no activity against GTP, nucleoside monophosphates or ADP-ribose. In terms of biological role, catalyzes the conversion of GTP to 2,5-diamino-6-ribosylamino-4(3H)-pyrimidinone 5'-phosphate (DARP), formate and pyrophosphate. The chain is Riboflavin biosynthesis protein VVA0006 from Vibrio vulnificus (strain YJ016).